The sequence spans 334 residues: Glycerol-3-phosphate dehydrogenase [NAD(P)+] (334 aa).

NADPH is bound by residues tryptophan 13, arginine 33, and lysine 106. Sn-glycerol 3-phosphate contacts are provided by lysine 106, glycine 137, and serine 139. Alanine 141 lines the NADPH pocket. Positions 192, 245, 255, 256, and 257 each coordinate sn-glycerol 3-phosphate. Residue lysine 192 is the Proton acceptor of the active site. Arginine 256 contributes to the NADPH binding site. Valine 280 and glutamate 282 together coordinate NADPH.

The protein belongs to the NAD-dependent glycerol-3-phosphate dehydrogenase family.

Its subcellular location is the cytoplasm. It carries out the reaction sn-glycerol 3-phosphate + NAD(+) = dihydroxyacetone phosphate + NADH + H(+). It catalyses the reaction sn-glycerol 3-phosphate + NADP(+) = dihydroxyacetone phosphate + NADPH + H(+). It functions in the pathway membrane lipid metabolism; glycerophospholipid metabolism. In terms of biological role, catalyzes the reduction of the glycolytic intermediate dihydroxyacetone phosphate (DHAP) to sn-glycerol 3-phosphate (G3P), the key precursor for phospholipid synthesis. The sequence is that of Glycerol-3-phosphate dehydrogenase [NAD(P)+] from Chlamydia trachomatis serovar L2 (strain ATCC VR-902B / DSM 19102 / 434/Bu).